We begin with the raw amino-acid sequence, 90 residues long: uncharacterized protein (90 aa).

This is an uncharacterized protein from Saccharolobus islandicus (Sulfolobus islandicus).